Reading from the N-terminus, the 390-residue chain is Magnesium-protoporphyrin IX monomethyl ester [oxidative] cyclase (390 aa).

Belongs to the AcsF family. Requires Fe cation as cofactor.

The enzyme catalyses Mg-protoporphyrin IX 13-monomethyl ester + 3 NADPH + 3 O2 + 2 H(+) = 3,8-divinyl protochlorophyllide a + 3 NADP(+) + 5 H2O. It participates in porphyrin-containing compound metabolism; chlorophyll biosynthesis (light-independent). Its function is as follows. Catalyzes the formation of the isocyclic ring in chlorophyll biosynthesis. Mediates the cyclase reaction, which results in the formation of divinylprotochlorophyllide (Pchlide) characteristic of all chlorophylls from magnesium-protoporphyrin IX 13-monomethyl ester (MgPMME). The chain is Magnesium-protoporphyrin IX monomethyl ester [oxidative] cyclase from Prochlorococcus marinus (strain AS9601).